The primary structure comprises 452 residues: Exodeoxyribonuclease 7 large subunit (452 aa).

The protein belongs to the XseA family. As to quaternary structure, heterooligomer composed of large and small subunits.

The protein resides in the cytoplasm. The catalysed reaction is Exonucleolytic cleavage in either 5'- to 3'- or 3'- to 5'-direction to yield nucleoside 5'-phosphates.. Functionally, bidirectionally degrades single-stranded DNA into large acid-insoluble oligonucleotides, which are then degraded further into small acid-soluble oligonucleotides. The polypeptide is Exodeoxyribonuclease 7 large subunit (Bacillus anthracis (strain A0248)).